Here is a 156-residue protein sequence, read N- to C-terminus: Regulatory protein RecX (156 aa).

The protein belongs to the RecX family.

It localises to the cytoplasm. Modulates RecA activity. This is Regulatory protein RecX from Pseudomonas putida (strain GB-1).